The primary structure comprises 595 residues: DNA primase (595 aa).

The CHC2-type zinc finger occupies 38–62 (CPFHQEKTPSFTVSNSKRFFYCFGC). The 83-residue stretch at 250-332 (NHSILVEGYF…EKKISFIRLP (83 aa)) folds into the Toprim domain. Residues Glu256, Asp300, and Asp302 each contribute to the Mg(2+) site.

The protein belongs to the DnaG primase family. As to quaternary structure, monomer. Interacts with DnaB. Zn(2+) is required as a cofactor. Mg(2+) serves as cofactor.

The catalysed reaction is ssDNA + n NTP = ssDNA/pppN(pN)n-1 hybrid + (n-1) diphosphate.. RNA polymerase that catalyzes the synthesis of short RNA molecules used as primers for DNA polymerase during DNA replication. This chain is DNA primase, found in Rickettsia conorii (strain ATCC VR-613 / Malish 7).